Reading from the N-terminus, the 365-residue chain is tRNA-specific 2-thiouridylase MnmA (365 aa).

ATP is bound by residues A6–S13 and L32. C101 serves as the catalytic Nucleophile. A disulfide bridge connects residues C101 and C199. Residue G125 participates in ATP binding. Residues K149–Q151 are interaction with tRNA. The active-site Cysteine persulfide intermediate is C199.

The protein belongs to the MnmA/TRMU family.

The protein resides in the cytoplasm. The enzyme catalyses S-sulfanyl-L-cysteinyl-[protein] + uridine(34) in tRNA + AH2 + ATP = 2-thiouridine(34) in tRNA + L-cysteinyl-[protein] + A + AMP + diphosphate + H(+). Catalyzes the 2-thiolation of uridine at the wobble position (U34) of tRNA, leading to the formation of s(2)U34. The chain is tRNA-specific 2-thiouridylase MnmA from Corynebacterium glutamicum (strain R).